The sequence spans 439 residues: Apolipoprotein N-acyltransferase (439 aa).

The next 6 membrane-spanning stretches (helical) occupy residues Leu-13–Phe-33, Leu-47–Ile-67, Phe-75–Leu-95, Tyr-97–Val-117, Asn-149–Phe-169, and Ile-175–Tyr-195. One can recognise a CN hydrolase domain in the interval Ile-207–Phe-439. The Proton acceptor role is filled by Glu-248. Lys-305 is a catalytic residue. Cys-355 acts as the Nucleophile in catalysis.

Belongs to the CN hydrolase family. Apolipoprotein N-acyltransferase subfamily.

It is found in the cell inner membrane. It catalyses the reaction N-terminal S-1,2-diacyl-sn-glyceryl-L-cysteinyl-[lipoprotein] + a glycerophospholipid = N-acyl-S-1,2-diacyl-sn-glyceryl-L-cysteinyl-[lipoprotein] + a 2-acyl-sn-glycero-3-phospholipid + H(+). It functions in the pathway protein modification; lipoprotein biosynthesis (N-acyl transfer). Its function is as follows. Catalyzes the phospholipid dependent N-acylation of the N-terminal cysteine of apolipoprotein, the last step in lipoprotein maturation. This Aquifex aeolicus (strain VF5) protein is Apolipoprotein N-acyltransferase.